Reading from the N-terminus, the 170-residue chain is Zinc finger A20 and AN1 domain-containing stress-associated protein 6 (170 aa).

The A20-type zinc-finger motif lies at Pro-10–Gln-44. Residues Cys-16, Cys-20, Cys-32, and Cys-35 each coordinate Zn(2+). The tract at residues Thr-53–Pro-76 is disordered. An AN1-type zinc finger spans residues Gln-105–Gly-151. Zn(2+)-binding residues include Cys-111, Cys-114, Cys-125, Cys-127, Cys-132, His-135, His-141, and Cys-143.

Its function is as follows. May be involved in environmental stress response. The sequence is that of Zinc finger A20 and AN1 domain-containing stress-associated protein 6 (SAP6) from Arabidopsis thaliana (Mouse-ear cress).